Reading from the N-terminus, the 338-residue chain is Fructose-1,6-bisphosphatase class 1 (338 aa).

Positions 94, 116, 118, and 119 each coordinate Mg(2+). Residues 119–122 (DGSS), asparagine 210, and lysine 276 each bind substrate. A Mg(2+)-binding site is contributed by glutamate 282.

This sequence belongs to the FBPase class 1 family. In terms of assembly, homotetramer. Requires Mg(2+) as cofactor.

It localises to the cytoplasm. It carries out the reaction beta-D-fructose 1,6-bisphosphate + H2O = beta-D-fructose 6-phosphate + phosphate. It participates in carbohydrate biosynthesis; gluconeogenesis. The chain is Fructose-1,6-bisphosphatase class 1 from Paraburkholderia phytofirmans (strain DSM 17436 / LMG 22146 / PsJN) (Burkholderia phytofirmans).